Consider the following 214-residue polypeptide: pH-sensitive calcium channel (214 aa).

Residues 1–15 (MQATVHESKQSIMQR) lie on the Cytoplasmic side of the membrane. Residues 16 to 37 (ILTVFVFTLLIATVGLFIGQFV) form a helical membrane-spanning segment. Topologically, residues 38–44 (PVALMLP) are extracellular. A helical membrane pass occupies residues 45 to 59 (LSILEVAMIILAFWM). The Cytoplasmic portion of the chain corresponds to 60–66 (RRRKAVG). Residues 67–86 (YAFVYTFAFVSGITLFPIVS) form a helical membrane-spanning segment. Residues 87–95 (HYASIAGAY) lie on the Extracellular side of the membrane. Residues 96-117 (VVLEAFGSTFVIFAVLGTIGAK) form a helical membrane-spanning segment. Over 118 to 122 (MKKDL) the chain is Cytoplasmic. The helical transmembrane segment at 123 to 146 (SFLWSFLLVAVLALAVVGIFNIFS) threads the bilayer. Over 147–151 (PLNSA) the chain is Extracellular. The chain crosses the membrane as a helical span at residues 152 to 175 (AMMAYSVIGTIVFSLYILYDLNQI). Over 176–185 (KHRHITEDLI) the chain is Cytoplasmic. A helical membrane pass occupies residues 186-207 (PVMALSLYLDFINLFINLLRFF). Over 208-214 (GILSSDD) the chain is Extracellular.

Belongs to the BI1 family. In terms of assembly, monomer.

Its subcellular location is the cell membrane. It catalyses the reaction Ca(2+)(in) = Ca(2+)(out). With respect to regulation, the calcium-release activity is mediated by two factors: pH and transmembrane ion gradient. It was proposed, based on an MD simulation, that the conserved aspartyl dyad (Asp-171-Asp-195) regulates Ca(2+) binding, pH sensing, and the channel pore opening and closing, and that protonation of Asp-171 probably weakens its interaction with Arg-60, facilitating the opening of the channel. Another study using nanodiscs suggests that Asp-171 is not a pH sensor regulating the pore dynamics; instead, it is only involved in the gating of calcium ions. When crystallized in detergents at different pH conditions, the transition between open and closed conformations is regulated by pH. Ca(2+) binding is inhibited by Na(+), K(+), Li(+), Yb(3+) and Lu(3+), but not by Mg(2+) and Mn(2+). Its function is as follows. Calcium channel that probably plays a role in the regulation of calcium homeostasis. Uptakes calcium ions and mediates calcium flux in proteoliposomes in a pH-dependent manner. When expressed in E.coli in the presence of high extracellular calcium concentrations, shows calcium-leak activity, increasing intracellular calcium concentration. It can also mediate Ca(2+) flux from the endoplamic reticulum (ER) when expressed in permeabilized mammalian cells. Calcium transport activity is also detected in ER-like lipid vesicles. This Bacillus subtilis (strain 168) protein is pH-sensitive calcium channel.